Reading from the N-terminus, the 215-residue chain is UPF0502 protein YceH (215 aa).

This sequence belongs to the UPF0502 family.

In Salmonella arizonae (strain ATCC BAA-731 / CDC346-86 / RSK2980), this protein is UPF0502 protein YceH.